A 283-amino-acid chain; its full sequence is Protein-S-isoprenylcysteine O-methyltransferase (283 aa).

Residues 1 to 15 lie on the Cytoplasmic side of the membrane; it reads MAAARRGSAGSEARL. The chain crosses the membrane as a helical span at residues 16–32; it reads SLATFLLGASVLALPLL. Residues 33–40 lie on the Lumenal side of the membrane; it reads TRAGLQGR. The chain crosses the membrane as a helical span at residues 41 to 58; it reads TGLALYVAGLNALLLLLY. The Cytoplasmic portion of the chain corresponds to 59-68; sequence RPPRYQIAIR. The chain crosses the membrane as a helical span at residues 69–86; it reads ACFLGFVFGCGVLLSFSQ. Residues 87–91 lie on the Lumenal side of the membrane; sequence SSWNH. A helical membrane pass occupies residues 92–111; sequence FGWYVCSLSLFHYSEYLVTA. Residues 112-130 are Cytoplasmic-facing; it reads VNNPKSLSLDSFLLNHSLE. A helical membrane pass occupies residues 131 to 148; it reads YTVAALSSWIEFTLENIF. Topologically, residues 149-153 are lumenal; sequence WPELK. Residues 154–173 traverse the membrane as a helical segment; sequence QITWLSATGLLMVVFGECLR. Residues 174–211 are Cytoplasmic-facing; it reads KAAMFTAGSNFNHVVQSEKSDTHTLVTSGVYAWCRHPS. Residues Gln-189, 196 to 199, Tyr-204, and 209 to 212 each bind S-adenosyl-L-methionine; these read HTLV and HPSY. Residues 212–227 traverse the membrane as a helical segment; it reads YVGWFYWSIGTQVMLC. Asn-228 is a topological domain (lumenal). The chain crosses the membrane as a helical span at residues 229-243; it reads PICGVVYALTVWRFF. The Cytoplasmic segment spans residues 244 to 283; the sequence is RDRTEEEEISLIHFFGEEYLDYKKRVPTGLPFIKGVKVEL. A substrate-binding site is contributed by Arg-246. Glu-250 serves as a coordination point for S-adenosyl-L-methionine.

This sequence belongs to the class VI-like SAM-binding methyltransferase superfamily. Isoprenylcysteine carboxyl methyltransferase family. Highly enriched in adult cerebellum, with a low level expression in other brain regions.

It localises to the endoplasmic reticulum membrane. It catalyses the reaction [protein]-C-terminal S-[(2E,6E)-farnesyl]-L-cysteine + S-adenosyl-L-methionine = [protein]-C-terminal S-[(2E,6E)-farnesyl]-L-cysteine methyl ester + S-adenosyl-L-homocysteine. Catalyzes the post-translational methylation of isoprenylated C-terminal cysteine residues. In Mus musculus (Mouse), this protein is Protein-S-isoprenylcysteine O-methyltransferase (Icmt).